Here is a 120-residue protein sequence, read N- to C-terminus: MPKVYSYQEVAEHNGPENFWIIIDDKVYDVSQFKDEHPGGDEIIMDLGGQDATESFVDIGHSDEALRLLKGLYIGDVDKTSERVSVEKVSTSENQSKGSGTLVVILAILMLGVAYYLLNE.

The Cytochrome b5 heme-binding domain maps to P2–D78. Heme-binding residues include H37 and H61. A helical transmembrane segment spans residues G98–L118.

It belongs to the cytochrome b5 family.

It is found in the endoplasmic reticulum membrane. The protein resides in the microsome membrane. Functionally, membrane bound hemoprotein which function as an electron carrier for several membrane bound oxygenases. It plays a role in fatty-acid desaturation and is also involved in several steps of the sterol biosynthesis pathway, particularly in the 4-demethylation of the 4,4'-dimethyl zymosterol. This chain is Cytochrome b5 (CYB5), found in Saccharomyces cerevisiae (strain ATCC 204508 / S288c) (Baker's yeast).